A 126-amino-acid chain; its full sequence is Histone H2B type 3-B (126 aa).

Residues 1 to 12 are compositionally biased toward low complexity; that stretch reads MPDPSKSAPAPK. A disordered region spans residues 1–35; it reads MPDPSKSAPAPKKGSKKAVTKAQKKDGKKRKRGRK. Pro2 is modified (N-acetylproline). An N6-(2-hydroxyisobutyryl)lysine; alternate modification is found at Lys6. Residue Lys6 is modified to N6-(beta-hydroxybutyryl)lysine; alternate. Lys6 is subject to N6-acetyllysine; alternate. N6-butyryllysine; alternate is present on Lys6. Lys6 is subject to N6-crotonyllysine; alternate. Lys6 bears the N6-lactoyllysine; alternate mark. Lys6 participates in a covalent cross-link: Glycyl lysine isopeptide (Lys-Gly) (interchain with G-Cter in SUMO2); alternate. Ser7 bears the ADP-ribosylserine mark. Lys12 carries the post-translational modification N6-(beta-hydroxybutyryl)lysine; alternate. Residues Lys12 and Lys13 each carry the N6-acetyllysine; alternate modification. An N6-crotonyllysine; alternate mark is found at Lys12 and Lys13. An N6-lactoyllysine; alternate modification is found at Lys12. Position 13 is an N6-(2-hydroxyisobutyryl)lysine; alternate (Lys13). A Phosphoserine; by STK4/MST1 modification is found at Ser15. Lys16, Lys17, Lys21, and Lys24 each carry N6-acetyllysine; alternate. An N6-crotonyllysine; alternate mark is found at Lys16, Lys17, Lys21, and Lys24. An N6-lactoyllysine; alternate mark is found at Lys16, Lys17, Lys21, and Lys24. N6-(beta-hydroxybutyryl)lysine; alternate is present on residues Lys17 and Lys21. At Lys17 the chain carries N6-glutaryllysine; alternate. 2 positions are modified to N6-(2-hydroxyisobutyryl)lysine; alternate: Lys21 and Lys24. N6-butyryllysine; alternate is present on Lys21. Lys21 is covalently cross-linked (Glycyl lysine isopeptide (Lys-Gly) (interchain with G-Cter in SUMO2); alternate). Residue Lys25 is modified to N6-(2-hydroxyisobutyryl)lysine. Lys35 carries the N6-(2-hydroxyisobutyryl)lysine; alternate modification. Residue Lys35 is modified to N6-(beta-hydroxybutyryl)lysine; alternate. Position 35 is an N6-crotonyllysine; alternate (Lys35). Lys35 is subject to N6-glutaryllysine; alternate. The residue at position 35 (Lys35) is an N6-succinyllysine; alternate. Residue Lys35 forms a Glycyl lysine isopeptide (Lys-Gly) (interchain with G-Cter in ubiquitin); alternate linkage. The residue at position 36 (Glu36) is a PolyADP-ribosyl glutamic acid. Position 37 is a phosphoserine; by AMPK (Ser37). An N6-(2-hydroxyisobutyryl)lysine; alternate mark is found at Lys44, Lys47, and Lys58. N6-lactoyllysine; alternate is present on Lys44. N6-glutaryllysine; alternate occurs at positions 44 and 47. Lys47 is subject to N6-methyllysine; alternate. Residue Lys58 is modified to N6,N6-dimethyllysine; alternate. Arg80 bears the Dimethylated arginine mark. The residue at position 86 (Lys86) is an N6-(2-hydroxyisobutyryl)lysine; alternate. At Lys86 the chain carries N6-(beta-hydroxybutyryl)lysine; alternate. Lys86 carries the N6-acetyllysine; alternate modification. Lys86 carries the N6-lactoyllysine; alternate modification. The residue at position 86 (Lys86) is an N6,N6,N6-trimethyllysine; alternate. An omega-N-methylarginine mark is found at Arg87 and Arg93. Lys109 is modified (N6-(2-hydroxyisobutyryl)lysine; alternate). Lys109 carries the N6-lactoyllysine; alternate modification. At Lys109 the chain carries N6-glutaryllysine; alternate. Lys109 bears the N6-methyllysine; alternate mark. O-linked (GlcNAc) serine glycosylation occurs at Ser113. Residue Thr116 is modified to Phosphothreonine. An N6-(2-hydroxyisobutyryl)lysine; alternate mark is found at Lys117 and Lys121. 2 positions are modified to N6-(beta-hydroxybutyryl)lysine; alternate: Lys117 and Lys121. An N6-lactoyllysine; alternate mark is found at Lys117 and Lys121. 2 positions are modified to N6-glutaryllysine; alternate: Lys117 and Lys121. Residues Lys117 and Lys121 each carry the N6-succinyllysine; alternate modification. Lys117 bears the N6-malonyllysine; alternate mark. Position 117 is an N6-methylated lysine; alternate (Lys117). Lys121 participates in a covalent cross-link: Glycyl lysine isopeptide (Lys-Gly) (interchain with G-Cter in ubiquitin); alternate.

It belongs to the histone H2B family. In terms of assembly, the nucleosome is a histone octamer containing two molecules each of H2A, H2B, H3 and H4 assembled in one H3-H4 heterotetramer and two H2A-H2B heterodimers. The octamer wraps approximately 147 bp of DNA. Monoubiquitination at Lys-35 (H2BK34Ub) by the MSL1/MSL2 dimer is required for histone H3 'Lys-4' (H3K4me) and 'Lys-79' (H3K79me) methylation and transcription activation at specific gene loci, such as HOXA9 and MEIS1 loci. Similarly, monoubiquitination at Lys-121 (H2BK120Ub) by the RNF20/40 complex gives a specific tag for epigenetic transcriptional activation and is also prerequisite for histone H3 'Lys-4' and 'Lys-79' methylation. It also functions cooperatively with the FACT dimer to stimulate elongation by RNA polymerase II. H2BK120Ub also acts as a regulator of mRNA splicing: deubiquitination by USP49 is required for efficient cotranscriptional splicing of a large set of exons. Post-translationally, phosphorylation at Ser-37 (H2BS36ph) by AMPK in response to stress promotes transcription. Phosphorylated on Ser-15 (H2BS14ph) by STK4/MST1 during apoptosis; which facilitates apoptotic chromatin condensation. Also phosphorylated on Ser-15 in response to DNA double strand breaks (DSBs), and in correlation with somatic hypermutation and immunoglobulin class-switch recombination. In terms of processing, glcNAcylation at Ser-113 promotes monoubiquitination of Lys-121. It fluctuates in response to extracellular glucose, and associates with transcribed genes. ADP-ribosylated by PARP1 or PARP2 on Ser-7 (H2BS6ADPr) in response to DNA damage. H2BS6ADPr promotes recruitment of CHD1L. Poly ADP-ribosylation on Glu-36 (H2BE35ADPr) by PARP1 regulates adipogenesis: it inhibits phosphorylation at Ser-37 (H2BS36ph), thereby blocking expression of pro-adipogenetic genes. Post-translationally, crotonylation (Kcr) is specifically present in male germ cells and marks testis-specific genes in post-meiotic cells, including X-linked genes that escape sex chromosome inactivation in haploid cells. Crotonylation marks active promoters and enhancers and confers resistance to transcriptional repressors. It is also associated with post-meiotically activated genes on autosomes. In terms of processing, lactylated in macrophages by EP300/P300 by using lactoyl-CoA directly derived from endogenous or exogenous lactate, leading to stimulates gene transcription.

The protein resides in the nucleus. The protein localises to the chromosome. Core component of nucleosome. Nucleosomes wrap and compact DNA into chromatin, limiting DNA accessibility to the cellular machineries which require DNA as a template. Histones thereby play a central role in transcription regulation, DNA repair, DNA replication and chromosomal stability. DNA accessibility is regulated via a complex set of post-translational modifications of histones, also called histone code, and nucleosome remodeling. This chain is Histone H2B type 3-B, found in Homo sapiens (Human).